The following is a 431-amino-acid chain: uncharacterized protein (431 aa).

4 helical membrane passes run 228 to 248 (GLLSIPLTSSIIIYGFIHYLS), 279 to 299 (IGLPKIILYSNLATFCYNFTF), 349 to 369 (ILWPFVGKCTGGLLLNAFLWI), and 388 to 408 (MIFNIIGCGTAAIGWSSLKLY).

Its subcellular location is the membrane. This is an uncharacterized protein from Saccharomyces cerevisiae (strain ATCC 204508 / S288c) (Baker's yeast).